The primary structure comprises 300 residues: E3 ubiquitin-protein ligase RNF212B (300 aa).

The RING-type zinc-finger motif lies at 6–40; sequence CNQCFRKDGAHFFVTSCGHIFCKKCVTLEKCAVCG. Positions 88 to 124 form a coiled coil; sequence LIAFYKHRITKLETAMQETQQALVSQDKELSVLRKEN. 2 disordered regions span residues 141–251 and 280–300; these read YQGS…HTRV and PYQQQRQMGLPSGREAWTTSR. Polar residues predominate over residues 155 to 169; that stretch reads TSPSQSVTPRPSFQH. Residues 170-183 show a composition bias toward low complexity; that stretch reads SSQVVSRSSSVESV. The segment covering 191-200 has biased composition (gly residues); the sequence is GSLGQGGRGL. The segment covering 211-234 has biased composition (polar residues); it reads NETPSPASTHSLSYRPSSASSGQG.

As to quaternary structure, homodimer. Autoubiquitinated.

Its subcellular location is the chromosome. It carries out the reaction S-ubiquitinyl-[E2 ubiquitin-conjugating enzyme]-L-cysteine + [acceptor protein]-L-lysine = [E2 ubiquitin-conjugating enzyme]-L-cysteine + N(6)-ubiquitinyl-[acceptor protein]-L-lysine.. It participates in protein modification; protein ubiquitination. Its function is as follows. Ubiquitin E3 ligase that acts as a crucial factor for crossing-over (CO) formation during meiosis. Essential for normal prophase I progression and for ensuring appropriate CO designation in meiosis. Recruits key components of the cross-over machinery either directly ou indirectly, leading to the activation of the MutL-gamma complex. The function of RNF212B in CO designation is dependent on its catalytic activity. The chain is E3 ubiquitin-protein ligase RNF212B (RNF212B) from Pongo abelii (Sumatran orangutan).